Consider the following 497-residue polypeptide: B3 domain-containing protein REM1 (497 aa).

3 consecutive DNA-binding regions (TF-B3) follow at residues 7–92, 142–239, and 278–379; these read PSLF…SSES, FLRA…LCSH, and FLTQ…HSKI. Residues 87–135 form a disordered region; the sequence is AVSSESDDDESDDTDDSESDDESNDTDDSESDDSEDNGEGDSSLVNKEA. Residues 91-125 are compositionally biased toward acidic residues; that stretch reads ESDDDESDDTDDSESDDESNDTDDSESDDSEDNGE.

As to expression, specifically expressed in the reproductive meristem.

The protein resides in the nucleus. Its function is as follows. May play a role in flower development. The polypeptide is B3 domain-containing protein REM1 (REM1) (Brassica oleracea var. botrytis (Cauliflower)).